Consider the following 160-residue polypeptide: SsrA-binding protein (160 aa).

The protein belongs to the SmpB family.

The protein resides in the cytoplasm. Functionally, required for rescue of stalled ribosomes mediated by trans-translation. Binds to transfer-messenger RNA (tmRNA), required for stable association of tmRNA with ribosomes. tmRNA and SmpB together mimic tRNA shape, replacing the anticodon stem-loop with SmpB. tmRNA is encoded by the ssrA gene; the 2 termini fold to resemble tRNA(Ala) and it encodes a 'tag peptide', a short internal open reading frame. During trans-translation Ala-aminoacylated tmRNA acts like a tRNA, entering the A-site of stalled ribosomes, displacing the stalled mRNA. The ribosome then switches to translate the ORF on the tmRNA; the nascent peptide is terminated with the 'tag peptide' encoded by the tmRNA and targeted for degradation. The ribosome is freed to recommence translation, which seems to be the essential function of trans-translation. In Nocardia farcinica (strain IFM 10152), this protein is SsrA-binding protein.